A 1238-amino-acid chain; its full sequence is uncharacterized protein (1238 aa).

6 disordered regions span residues methionine 1–serine 38, serine 122–phenylalanine 156, proline 229–glutamate 439, lysine 660–alanine 1016, glutamate 1051–serine 1083, and lysine 1098–arginine 1191. Composition is skewed to low complexity over residues asparagine 10–asparagine 26, leucine 129–leucine 149, and glutamine 234–glutamine 276. Over residues glutamate 317–serine 343 the composition is skewed to polar residues. A compositionally biased stretch (basic and acidic residues) spans glutamine 344–glycine 361. A compositionally biased stretch (acidic residues) spans aspartate 362 to asparagine 372. The span at threonine 383–lysine 394 shows a compositional bias: basic residues. Over residues glycine 395–alanine 416 the composition is skewed to basic and acidic residues. Low complexity-rich tracts occupy residues threonine 417 to asparagine 435, glutamine 678 to glutamate 691, and glutamine 712 to glutamine 792. Over residues glutamine 793–glutamine 805 the composition is skewed to basic and acidic residues. Low complexity-rich tracts occupy residues serine 806–lysine 859 and serine 882–arginine 906. Residues glutamate 916 to valine 927 show a composition bias toward acidic residues. A compositionally biased stretch (polar residues) spans methionine 929–glutamine 944. Residues glutamate 966–alanine 975 are compositionally biased toward basic and acidic residues. Acidic residues predominate over residues glycine 976–glutamine 990. Low complexity-rich tracts occupy residues glutamine 1062–serine 1083 and serine 1108–asparagine 1121. A compositionally biased stretch (polar residues) spans proline 1123 to arginine 1133. Low complexity predominate over residues serine 1142–glutamate 1181. The segment covering asparagine 1182–arginine 1191 has biased composition (polar residues).

This is an uncharacterized protein from Dictyostelium discoideum (Social amoeba).